The sequence spans 209 residues: ATP synthase subunit b', chloroplastic (209 aa).

A chloroplast-targeting transit peptide spans 1 to 62 (MASLLARPQQ…NALMAMPAAA (62 aa)). A helical membrane pass occupies residues 67–87 (IFDFNLTLPVMAGEFLLLMVF).

This sequence belongs to the ATPase B chain family. F-type ATPases have 2 components, F(1) - the catalytic core - and F(0) - the membrane proton channel. F(1) has five subunits: alpha(3), beta(3), gamma(1), delta(1), epsilon(1). F(0) has four main subunits: a(1), b(1), b'(1) and c(10-14). The alpha and beta chains form an alternating ring which encloses part of the gamma chain. F(1) is attached to F(0) by a central stalk formed by the gamma and epsilon chains, while a peripheral stalk is formed by the delta, b and b' chains.

It is found in the plastid. It localises to the chloroplast thylakoid membrane. In terms of biological role, f(1)F(0) ATP synthase produces ATP from ADP in the presence of a proton or sodium gradient. F-type ATPases consist of two structural domains, F(1) containing the extramembraneous catalytic core and F(0) containing the membrane proton channel, linked together by a central stalk and a peripheral stalk. During catalysis, ATP synthesis in the catalytic domain of F(1) is coupled via a rotary mechanism of the central stalk subunits to proton translocation. Component of the F(0) channel, it forms part of the peripheral stalk, linking F(1) to F(0). The b'-subunit is a diverged and duplicated form of b found in plants and photosynthetic bacteria. This is ATP synthase subunit b', chloroplastic from Chlamydomonas reinhardtii (Chlamydomonas smithii).